Reading from the N-terminus, the 378-residue chain is Cobalt-precorrin-5B C(1)-methyltransferase (378 aa).

This sequence belongs to the CbiD family.

It catalyses the reaction Co-precorrin-5B + S-adenosyl-L-methionine = Co-precorrin-6A + S-adenosyl-L-homocysteine. It participates in cofactor biosynthesis; adenosylcobalamin biosynthesis; cob(II)yrinate a,c-diamide from sirohydrochlorin (anaerobic route): step 6/10. In terms of biological role, catalyzes the methylation of C-1 in cobalt-precorrin-5B to form cobalt-precorrin-6A. In Thermoplasma volcanium (strain ATCC 51530 / DSM 4299 / JCM 9571 / NBRC 15438 / GSS1), this protein is Cobalt-precorrin-5B C(1)-methyltransferase.